Here is a 378-residue protein sequence, read N- to C-terminus: Secreted LysM effector ldpA (378 aa).

The N-terminal stretch at 1 to 19 (MMKSIRFLASALALCLVDA) is a signal peptide. A compositionally biased stretch (low complexity) spans 118–131 (WTPPTTTTRSTSSS). Residues 118–139 (WTPPTTTTRSTSSSAGNGVTTP) form a disordered region. The region spanning 152–198 (RFYLVVSGDSCYDIAAAQGISLDNFYTWNPAVGSSCGGLWPDYYVCV) is the LysM 1 domain. The disordered stretch occupies residues 208-230 (TTTTTTTPTTTSTTTTTAGNGVT). LysM domains are found at residues 245–291 (KFYQ…YVCV) and 330–376 (KFYL…YVCV).

Belongs to the secreted LysM effector family.

Its subcellular location is the secreted. The protein localises to the cell wall. It is found in the extracellular space. It localises to the extracellular matrix. Functionally, cell wall chitin of A.fumigatus recruits lung eosinophils during infection and ldpA might have a role in sequestration of chitin and act as triggers of host immunity to dampen host defense. This Aspergillus fumigatus (strain ATCC MYA-4609 / CBS 101355 / FGSC A1100 / Af293) (Neosartorya fumigata) protein is Secreted LysM effector ldpA.